A 124-amino-acid polypeptide reads, in one-letter code: FK506-binding protein 1 (124 aa).

Residues 23 to 122 form the PPIase FKBP-type domain; sequence GDTVTIHYDG…VFEVELLGVN (100 aa).

Belongs to the FKBP-type PPIase family. FKBP1 subfamily.

It localises to the cytoplasm. It carries out the reaction [protein]-peptidylproline (omega=180) = [protein]-peptidylproline (omega=0). Inhibited by rapamycin. PPIases accelerate the folding of proteins. It catalyzes the cis-trans isomerization of proline imidic peptide bonds in oligopeptides. The polypeptide is FK506-binding protein 1 (RBP1) (Candida albicans (strain SC5314 / ATCC MYA-2876) (Yeast)).